A 182-amino-acid polypeptide reads, in one-letter code: ATP synthase subunit b, chloroplastic (182 aa).

Residues 33-55 (VLNIMLLLFGLIYVLKQFLGSLL) traverse the membrane as a helical segment.

This sequence belongs to the ATPase B chain family. F-type ATPases have 2 components, F(1) - the catalytic core - and F(0) - the membrane proton channel. F(1) has five subunits: alpha(3), beta(3), gamma(1), delta(1), epsilon(1). F(0) has four main subunits: a(1), b(1), b'(1) and c(10-14). The alpha and beta chains form an alternating ring which encloses part of the gamma chain. F(1) is attached to F(0) by a central stalk formed by the gamma and epsilon chains, while a peripheral stalk is formed by the delta, b and b' chains.

Its subcellular location is the plastid. It is found in the chloroplast thylakoid membrane. Functionally, f(1)F(0) ATP synthase produces ATP from ADP in the presence of a proton or sodium gradient. F-type ATPases consist of two structural domains, F(1) containing the extramembraneous catalytic core and F(0) containing the membrane proton channel, linked together by a central stalk and a peripheral stalk. During catalysis, ATP synthesis in the catalytic domain of F(1) is coupled via a rotary mechanism of the central stalk subunits to proton translocation. Component of the F(0) channel, it forms part of the peripheral stalk, linking F(1) to F(0). The polypeptide is ATP synthase subunit b, chloroplastic (Antithamnion sp. (Red alga)).